Reading from the N-terminus, the 320-residue chain is Cytochrome c biogenesis protein CcsA (320 aa).

The next 8 membrane-spanning stretches (helical) occupy residues 9–29 (ILAH…WGTL), 36–56 (LSSS…GLLI), 70–90 (LYES…LLEV), 97–117 (WLGA…TLGL), 143–163 (ILFS…LLVI), 227–247 (AIGL…IWAN), 254–274 (WSWD…AIYL), and 288–308 (AIVA…VNLL).

The protein belongs to the CcmF/CycK/Ccl1/NrfE/CcsA family. In terms of assembly, may interact with Ccs1.

The protein resides in the plastid. It localises to the chloroplast thylakoid membrane. Required during biogenesis of c-type cytochromes (cytochrome c6 and cytochrome f) at the step of heme attachment. The polypeptide is Cytochrome c biogenesis protein CcsA (Pinus thunbergii (Japanese black pine)).